Consider the following 1028-residue polypeptide: RNA cytidine acetyltransferase 2 (1028 aa).

ATP is bound by residues 286–295 (GRGKSAALGL) and R458. An N-acetyltransferase domain is found at 546 to 729 (VLLGPVDESQ…FAPFYVSQIP (184 aa)). Acetyl-CoA-binding positions include 617–619 (IAV), 624–630 (MKMGYGS), and K717. Positions 982–1028 (SGIISVKSTKSENENGFDKSTKKRSSDKRSSSSSKSKSSKKRKSLKE) are disordered. Positions 990-1001 (TKSENENGFDKS) are enriched in basic and acidic residues. Over residues 1018–1028 (KSSKKRKSLKE) the composition is skewed to basic residues.

Belongs to the RNA cytidine acetyltransferase family. NAT10 subfamily.

Its subcellular location is the nucleus. The protein resides in the nucleolus. The enzyme catalyses a cytidine in 18S rRNA + acetyl-CoA + ATP + H2O = an N(4)-acetylcytidine in 18S rRNA + ADP + phosphate + CoA + H(+). The catalysed reaction is a cytidine in tRNA + acetyl-CoA + ATP + H2O = an N(4)-acetylcytidine in tRNA + ADP + phosphate + CoA + H(+). RNA cytidine acetyltransferase with specificity toward both 18S rRNA and tRNAs. Catalyzes the formation of N(4)-acetylcytidine (ac4C) in 18S rRNA. Required for early nucleolar cleavages of precursor rRNA at sites A0, A1 and A2 during 18S rRNA synthesis. Catalyzes the formation of ac4C in serine and leucine tRNAs. Requires a tRNA-binding adapter protein for full tRNA acetyltransferase activity but not for 18S rRNA acetylation. This chain is RNA cytidine acetyltransferase 2, found in Arabidopsis thaliana (Mouse-ear cress).